The following is a 583-amino-acid chain: Hyaluronan synthase-related protein (583 aa).

At 1-29 (MENTTDPENIPVSKPKYPTIRRILSQTFR) the chain is on the cytoplasmic side. Residues 30–50 (ILLLFSITTAYVLGYQALCHQ) form a helical membrane-spanning segment. Topologically, residues 51 to 52 (GL) are extracellular. The chain crosses the membrane as a helical span at residues 53-73 (LITFGLYGAAMLLHLLMQGIF). Topologically, residues 74 to 393 (ANLEIRRIEK…CNAQWWHQHH (320 aa)) are cytoplasmic. Residues 394 to 414 (IWMTYESATGIFFPFFVTAVL) form a helical membrane-spanning segment. Over 415–425 (IRLMYSSSLCN) the chain is Extracellular. Residues 426 to 446 (IVWLFLCIQIMSLLLSLYASW) traverse the membrane as a helical segment. The Cytoplasmic portion of the chain corresponds to 447–457 (QSKKLSMVLMS). A helical transmembrane segment spans residues 458-478 (LYSTLYIIWLLPCQLVALLTI). Residues 479 to 497 (AKSDWGTSGRKKVVNNYVP) are Extracellular-facing. Residues 498–518 (LFSLSIWAAVLLGGLCYSMYI) form a helical membrane-spanning segment. Topologically, residues 519-535 (GCRKDWSKPQANRELYH) are cytoplasmic. The chain crosses the membrane as a helical span at residues 536–556 (LLYGCAGYMAYWVLMTVIYCV). The Extracellular segment spans residues 557 to 583 (SGSCCKMRSQAVPQTHDITSLSVSLLV).

It belongs to the NodC/HAS family.

The protein resides in the membrane. In Xenopus laevis (African clawed frog), this protein is Hyaluronan synthase-related protein (has-rs).